The chain runs to 211 residues: Large ribosomal subunit protein uL4 (211 aa).

Residues 48 to 89 (KRAGTASTKTRVEVRGGGAKPWRQKGTGRARAGSRTSPLWRG) are disordered.

This sequence belongs to the universal ribosomal protein uL4 family. As to quaternary structure, part of the 50S ribosomal subunit.

Functionally, one of the primary rRNA binding proteins, this protein initially binds near the 5'-end of the 23S rRNA. It is important during the early stages of 50S assembly. It makes multiple contacts with different domains of the 23S rRNA in the assembled 50S subunit and ribosome. Forms part of the polypeptide exit tunnel. The protein is Large ribosomal subunit protein uL4 of Desulfotalea psychrophila (strain LSv54 / DSM 12343).